The primary structure comprises 1023 residues: RTX-I toxin determinant A from serotypes 5/10 (1023 aa).

Transmembrane regions (helical) follow at residues 226–256 (NNLP…ILSN), 297–326 (STTA…ADKF), and 367–406 (INSV…SGIL). 6 Hemolysin-type calcium-binding repeats span residues 730 to 747 (FGSR…DDEI), 748 to 765 (YGND…NDVI), 766 to 783 (HGGD…NDRL), 784 to 801 (IGGK…DDEL), 812 to 829 (LGGA…TNLF), and 830 to 847 (DGGV…KDIY).

The protein belongs to the RTX prokaryotic toxin (TC 1.C.11) family. Palmitoylated by ApxIC. The toxin only becomes active when modified.

It localises to the secreted. The protein resides in the host cell membrane. One of the virulence factors of A.pleuropneumoniae, which has a strong hemolytic activity and is cytotoxic for alveolar macrophages and neutrophils. The sequence is that of RTX-I toxin determinant A from serotypes 5/10 (apxIA) from Actinobacillus pleuropneumoniae (Haemophilus pleuropneumoniae).